A 562-amino-acid chain; its full sequence is Adenylate kinase isoenzyme 5 (562 aa).

Adenylate kinase regions lie at residues 133 to 316 (KIIL…MAVD) and 377 to 559 (KIIF…TAID). ATP is bound at residue 142–147 (GSGKGT). An NMP 1 region spans residues 162-193 (SVGELLRKKIHSTSSNRKWSLIAKIITTGELA). Residues Arg168, 191 to 193 (ELA), 219 to 222 (GFPR), and Gln226 each bind AMP. The LID 1 stretch occupies residues 256–266 (KRAEQQGRPDD). Arg257 contacts ATP. 2 residues coordinate AMP: Arg263 and Arg274. Residue 386–391 (GSGKGT) coordinates ATP. Residues 406–435 (STGELLREELASESERSKLIRDIMERGDLV) form an NMP 2 region. AMP contacts are provided by residues Thr407, Arg412, 433 to 435 (DLV), 462 to 465 (GYPR), and Gln469. Residues 499 to 509 (QRSRSSLPVDD) are LID 2. Position 500 (Arg500) interacts with ATP. AMP is bound at residue Arg517. Gly545 lines the ATP pocket.

It belongs to the adenylate kinase family. As to quaternary structure, monomer. Interacts with YWHAZ. Brain specific.

It localises to the cytoplasm. The catalysed reaction is AMP + ATP = 2 ADP. It carries out the reaction a 2'-deoxyribonucleoside 5'-diphosphate + ATP = a 2'-deoxyribonucleoside 5'-triphosphate + ADP. It catalyses the reaction a ribonucleoside 5'-diphosphate + ATP = a ribonucleoside 5'-triphosphate + ADP. In terms of biological role, nucleoside monophosphate (NMP) kinase that catalyzes the reversible transfer of the terminal phosphate group between nucleoside triphosphates and monophosphates. Active on AMP and dAMP with ATP as a donor. When GTP is used as phosphate donor, the enzyme phosphorylates AMP, CMP, and to a small extent dCMP. Also displays broad nucleoside diphosphate kinase activity. The protein is Adenylate kinase isoenzyme 5 (AK5) of Homo sapiens (Human).